The primary structure comprises 282 residues: Protein N-terminal and lysine N-methyltransferase efm7 (282 aa).

A compositionally biased stretch (basic and acidic residues) spans 1 to 13; sequence MSKPEEVVNHVPE. The tract at residues 1–32 is disordered; it reads MSKPEEVVNHVPEDEGSDIEAGGLFEDPPDFY. S-adenosyl-L-methionine is bound by residues Trp67, 93 to 95, Asp115, Trp152, and Ala179; that span reads GAA.

This sequence belongs to the class I-like SAM-binding methyltransferase superfamily. EFM7 family.

The protein localises to the cytoplasm. Functionally, S-adenosyl-L-methionine-dependent protein methyltransferase that trimethylates the N-terminal glycine 'Gly-2' of elongation factor 1-alpha, before also catalyzing the mono- and dimethylation of 'Lys-3'. This Neurospora crassa (strain ATCC 24698 / 74-OR23-1A / CBS 708.71 / DSM 1257 / FGSC 987) protein is Protein N-terminal and lysine N-methyltransferase efm7 (nnt-1).